A 672-amino-acid polypeptide reads, in one-letter code: Segment polarity protein dishevelled homolog mig-5 (672 aa).

The DIX domain occupies 9–91; sequence CSQIKVFYYL…GFYEIFLVST (83 aa). Disordered regions lie at residues 97 to 127, 150 to 174, and 187 to 215; these read LPRN…ATPY, YTSN…SSLY, and DDDR…ATES. Polar residues predominate over residues 98–108; that stretch reads PRNSGTMTRPQ. Basic and acidic residues predominate over residues 160-169; that stretch reads YDEHTRRTGD. Residues 191–202 are compositionally biased toward basic residues; sequence RRKKQKKERFRR. In terms of domain architecture, PDZ spans 226 to 294; sequence EIYLPMKNVP…PQAVRSLREA (69 aa). Residues 427 to 501 form the DEP domain; sequence PDSGLAVKNR…TEKCYYVFGD (75 aa). The interval 604 to 672 is disordered; the sequence is KNNHRQVPAP…SNSRTRILRT (69 aa). The span at 660-672 shows a compositional bias: polar residues; sequence ENSSNSRTRILRT.

The protein belongs to the DSH family.

The protein localises to the cytoplasm. It is found in the cell cortex. It localises to the cell membrane. The protein resides in the cell junction. Plays a role in the signal transduction pathways mediated by multiple Wnt genes. Functions redundantly with other dishevelled family members throughout development. During embryonic and larval development, controls cell migration and/or cell fate specification of hypodermal cells, hypodermal seam cells, vulval precursor cells and, through distal tip cell migration, somatic gonad precursor cells. In early embryos, regulates the orientation of the mitotic spindle of blastomeres and specifically, along with dsh-2, is required for the correct mitotic spindle orientation of the ABar blastomere division plane. Controls the polarity and the asymmetric localization of downstream components of the wnt/beta-catenin asymmetry pathway, and in particular, controls the asymmetric localization of the wnt receptor lin-17/Frizzled in ectodermal blast B cells. May act redundantly with dsh-2 to regulate the expression and nuclear localization of the beta-catenin homolog wrm-2, but alone seems to be required for the polarity of wrm-2 during the asymmetric cell division of hypodermal seam cells. Also, maintains the polarity and migration of QL neuroblasts in larvae. During the embryonic development of touch receptor neurons, may act redundantly with dsh-1, downstream of wnt signaling ligands and the wnt receptor lin-17/Frizzled, to direct the growth of neurites of touch receptor neurons towards the anterior of the body of the worm and towards the PLM touch receptor neuron and other tail neurons. May play a role in the guidance of posterior D-type motor neuron axons along the anteroposterior axis. The chain is Segment polarity protein dishevelled homolog mig-5 from Caenorhabditis elegans.